We begin with the raw amino-acid sequence, 210 residues long: C4-dicarboxylate TRAP transporter small permease protein DctQ (210 aa).

4 helical membrane-spanning segments follow: residues 13-33 (EGLIAFLLAAMTLVTFVYVVL), 77-97 (ALFAWLIFLGIAYGVRTAGHL), 113-133 (VLGVIACLACLGYAGLLCVAS), and 160-180 (IGLIVPVGFALVFIRFAEILV).

Belongs to the TRAP transporter small permease family. The complex comprises the extracytoplasmic solute receptor protein DctP, and the two transmembrane proteins DctQ and DctM.

It localises to the cell inner membrane. Its function is as follows. Part of the tripartite ATP-independent periplasmic (TRAP) transport system DctPQM involved in C4-dicarboxylates uptake. In Pseudomonas aeruginosa (strain ATCC 15692 / DSM 22644 / CIP 104116 / JCM 14847 / LMG 12228 / 1C / PRS 101 / PAO1), this protein is C4-dicarboxylate TRAP transporter small permease protein DctQ.